The sequence spans 381 residues: Cobalt-precorrin-5B C(1)-methyltransferase (381 aa).

Belongs to the CbiD family.

The catalysed reaction is Co-precorrin-5B + S-adenosyl-L-methionine = Co-precorrin-6A + S-adenosyl-L-homocysteine. It functions in the pathway cofactor biosynthesis; adenosylcobalamin biosynthesis; cob(II)yrinate a,c-diamide from sirohydrochlorin (anaerobic route): step 6/10. Catalyzes the methylation of C-1 in cobalt-precorrin-5B to form cobalt-precorrin-6A. This Prochlorococcus marinus (strain NATL1A) protein is Cobalt-precorrin-5B C(1)-methyltransferase.